The following is a 431-amino-acid chain: COBRA-like protein 4 (431 aa).

An N-terminal signal peptide occupies residues M1–A20. N-linked (GlcNAc...) asparagine glycosylation is found at N29, N154, N162, N201, N226, N306, N321, and N340. N414 is lipidated: GPI-anchor amidated asparagine. Positions F415–W431 are cleaved as a propeptide — removed in mature form.

It belongs to the COBRA family. In terms of tissue distribution, expressed in roots, stems, leaves, flowers and siliques.

The protein resides in the cell membrane. This Arabidopsis thaliana (Mouse-ear cress) protein is COBRA-like protein 4 (COBL4).